A 590-amino-acid polypeptide reads, in one-letter code: Aspartate--tRNA ligase (590 aa).

Glutamate 180 is an L-aspartate binding site. Positions 204-207 (QLFK) are aspartate. Arginine 226 is an L-aspartate binding site. Residues 226-228 (RDE) and glutamine 235 each bind ATP. An L-aspartate-binding site is contributed by histidine 454. Glutamate 488 is an ATP binding site. Residue arginine 495 coordinates L-aspartate. ATP is bound at residue 540 to 543 (GFDR).

Belongs to the class-II aminoacyl-tRNA synthetase family. Type 1 subfamily. Homodimer.

It localises to the cytoplasm. It catalyses the reaction tRNA(Asp) + L-aspartate + ATP = L-aspartyl-tRNA(Asp) + AMP + diphosphate. In terms of biological role, catalyzes the attachment of L-aspartate to tRNA(Asp) in a two-step reaction: L-aspartate is first activated by ATP to form Asp-AMP and then transferred to the acceptor end of tRNA(Asp). This chain is Aspartate--tRNA ligase, found in Clostridium kluyveri (strain NBRC 12016).